The primary structure comprises 444 residues: Argininosuccinate synthase (444 aa).

ATP is bound by residues 18–26 and Ala-44; that span reads AFSGGLDTS. Tyr-100 is an L-citrulline binding site. ATP contacts are provided by Gly-130 and Thr-132. Positions 132, 136, and 137 each coordinate L-aspartate. An L-citrulline-binding site is contributed by Asn-136. An ATP-binding site is contributed by Asp-137. L-citrulline contacts are provided by Arg-140 and Ser-193. Asp-195 contacts ATP. L-citrulline is bound by residues Thr-202, Glu-204, and Glu-281.

This sequence belongs to the argininosuccinate synthase family. Type 2 subfamily. As to quaternary structure, homotetramer.

The protein localises to the cytoplasm. It carries out the reaction L-citrulline + L-aspartate + ATP = 2-(N(omega)-L-arginino)succinate + AMP + diphosphate + H(+). It participates in amino-acid biosynthesis; L-arginine biosynthesis; L-arginine from L-ornithine and carbamoyl phosphate: step 2/3. The chain is Argininosuccinate synthase from Histophilus somni (strain 129Pt) (Haemophilus somnus).